The following is a 587-amino-acid chain: Probable phosphoribomutase (587 aa).

Residues threonine 49, arginine 53, and 149 to 150 (SH) contribute to the substrate site. The Phosphoserine intermediate role is filled by serine 149. The Mg(2+) site is built by serine 149, aspartate 306, aspartate 308, and aspartate 310. Serine 149 bears the Phosphoserine mark. Substrate contacts are provided by residues 310–311 (DR), threonine 380, 404–406 (EEA), and lysine 418.

This sequence belongs to the phosphohexose mutase family. It depends on Mg(2+) as a cofactor.

The protein resides in the cytoplasm. It is found in the nucleus. It carries out the reaction alpha-D-ribose 1-phosphate = D-ribose 5-phosphate. Converts ribose 1-phosphate to ribose 5-phosphate. Involved in ribose salvage via the pentose phosphate pathway. This chain is Probable phosphoribomutase, found in Schizosaccharomyces pombe (strain 972 / ATCC 24843) (Fission yeast).